The sequence spans 711 residues: Tyrosine-protein phosphatase 2 (711 aa).

Residues 21–130 enclose the Rhodanese domain; the sequence is TESVSWIIDL…FASSHPDAIV (110 aa). Disordered stretches follow at residues 275-306 and 329-376; these read APQQ…SRVR and IIPR…RANK. Composition is skewed to polar residues over residues 290-306 and 340-363; these read SYPS…SRVR and NAQN…SNTR. The Tyrosine-protein phosphatase domain occupies 433–698; the sequence is EMTRSLAFND…KFLYDVVDYL (266 aa). The Phosphocysteine intermediate role is filled by cysteine 630.

Belongs to the protein-tyrosine phosphatase family. Non-receptor class subfamily.

It localises to the cytoplasm. The catalysed reaction is O-phospho-L-tyrosyl-[protein] + H2O = L-tyrosyl-[protein] + phosphate. In terms of biological role, plays a role in inhibiting the onset of mitosis. Dephosphorylates sty1/spc1 and wis1/spc2/sty2. The sequence is that of Tyrosine-protein phosphatase 2 (pyp2) from Schizosaccharomyces pombe (strain 972 / ATCC 24843) (Fission yeast).